Here is a 183-residue protein sequence, read N- to C-terminus: Dual-action ribosomal maturation protein DarP (183 aa).

Belongs to the DarP family.

It is found in the cytoplasm. Member of a network of 50S ribosomal subunit biogenesis factors which assembles along the 30S-50S interface, preventing incorrect 23S rRNA structures from forming. Promotes peptidyl transferase center (PTC) maturation. The chain is Dual-action ribosomal maturation protein DarP from Salmonella gallinarum (strain 287/91 / NCTC 13346).